The following is a 252-amino-acid chain: NAD-dependent protein deacetylase (252 aa).

In terms of domain architecture, Deacetylase sirtuin-type spans D2 to I243. NAD(+) is bound by residues A28, T32, F39, R40, Q109, I111, D112, and H127. F39 contacts nicotinamide. Residues I111 and D112 each coordinate nicotinamide. The active-site Proton acceptor is H127. Zn(2+) contacts are provided by C135, C138, C148, and C150. 3 residues coordinate NAD(+): T188, S189, and N211.

This sequence belongs to the sirtuin family. Class U subfamily. The cofactor is Zn(2+).

It localises to the cytoplasm. The catalysed reaction is N(6)-acetyl-L-lysyl-[protein] + NAD(+) + H2O = 2''-O-acetyl-ADP-D-ribose + nicotinamide + L-lysyl-[protein]. Functionally, NAD-dependent protein deacetylase which modulates the activities of several enzymes which are inactive in their acetylated form. This is NAD-dependent protein deacetylase from Fusobacterium nucleatum subsp. nucleatum (strain ATCC 25586 / DSM 15643 / BCRC 10681 / CIP 101130 / JCM 8532 / KCTC 2640 / LMG 13131 / VPI 4355).